We begin with the raw amino-acid sequence, 412 residues long: MAFHCQRDCYATELLTEVVSCHPAQLKLENGGKKNTVSGFNVLLKDTVLFPEGGGQPDDRGFIGEVPVLRVIRQGPDAVHFVASPLDPATEVLVKIDWNRRFDHMQQHSGQHLVTAIADSLYGFKTTSWDLGRQRSVIELDTPLVTTEQLEAIEKIANQKIREHVPVHVRLITVDDPEFDMVRSRGLPDDHAGPVRIIDIEGVDANMCCGTHVRNLSDLQMIKILGTEKGKKNKTNLIFLSGERVLKYVSRSYNTEKTLTSLLKNGPEEHIEAVDKLQKSVKALQKNNLTLLRDLAVLTAENFKSKADRGKFFSLHRKEGDNEFMNIIANVIGTEDTLLFLTIGDEKTSGLFLLAGPPGIVEKFGPRVCEILDGKGAGKCGRFQGKANKMSQRAEVEVLLQKVISSVEITQE.

Zn(2+) is bound by residues H108, H112, C208, and H212.

It belongs to the class-II aminoacyl-tRNA synthetase family. Alax-L subfamily. The cofactor is Zn(2+).

The protein resides in the cytoplasm. Functionally, functions in trans to edit the amino acid moiety from incorrectly charged tRNA(Ala). The sequence is that of Alanyl-tRNA editing protein Aarsd1-A (aarsd1-a) from Xenopus laevis (African clawed frog).